The chain runs to 505 residues: Trans-cinnamate 4-monooxygenase (505 aa).

Residues 3 to 23 (LLLLEKTLLGLFAAIIVASIV) traverse the membrane as a helical segment. (E)-cinnamate is bound by residues 213–218 (RSRLAQ) and alanine 306. Cysteine 447 is a binding site for heme.

This sequence belongs to the cytochrome P450 family. Heme serves as cofactor.

The protein localises to the membrane. It catalyses the reaction (E)-cinnamate + reduced [NADPH--hemoprotein reductase] + O2 = (E)-4-coumarate + oxidized [NADPH--hemoprotein reductase] + H2O + H(+). Its pathway is phenylpropanoid metabolism; trans-4-coumarate biosynthesis; trans-4-coumarate from trans-cinnamate: step 1/1. Functionally, catalyzes the first oxidative step of the phenylpropanoid pathway in higher plants by transforming trans-cinnamate into p-coumarate. The compounds formed by this pathway are essential components for lignification, pollination, and defense against ultraviolet light, predators and pathogens. The polypeptide is Trans-cinnamate 4-monooxygenase (CYP73A4) (Catharanthus roseus (Madagascar periwinkle)).